The sequence spans 200 residues: MPPLLKLALELGPLLVFFFANARGEMLIERFPILGSIGAPIFLATALFMAATVIALAISWSMTRTLAIMPLVSGIVVLVFGALTLWLHNDTFIKMKPTIVNTLFGGILLGGLFFGKSLLGYVFDSAFRLDAEGWRKLTLRWGLFFIFLAIVNEIVWRNFSTDTWVSFKVWGIMPITIVFTLLQMPLIQKHSLTDEENTAS.

The next 6 membrane-spanning stretches (helical) occupy residues 1 to 21 (MPPL…FFAN), 37 to 57 (IGAP…IALA), 66 to 86 (LAIM…LTLW), 103 to 123 (LFGG…GYVF), 136 to 156 (KLTL…EIVW), and 167 to 187 (FKVW…MPLI).

This sequence belongs to the YciB family.

Its subcellular location is the cell inner membrane. Its function is as follows. Plays a role in cell envelope biogenesis, maintenance of cell envelope integrity and membrane homeostasis. In Brucella melitensis biotype 1 (strain ATCC 23456 / CCUG 17765 / NCTC 10094 / 16M), this protein is Inner membrane-spanning protein YciB.